A 134-amino-acid polypeptide reads, in one-letter code: Cell division protein SepF (134 aa).

Belongs to the SepF family. As to quaternary structure, homodimer. Interacts with FtsZ.

The protein localises to the cytoplasm. Cell division protein that is part of the divisome complex and is recruited early to the Z-ring. Probably stimulates Z-ring formation, perhaps through the cross-linking of FtsZ protofilaments. Its function overlaps with FtsA. The protein is Cell division protein SepF of Caldanaerobacter subterraneus subsp. tengcongensis (strain DSM 15242 / JCM 11007 / NBRC 100824 / MB4) (Thermoanaerobacter tengcongensis).